The chain runs to 254 residues: HTH-type transcriptional repressor DasR (254 aa).

Residues 17-87 enclose the HTH gntR-type domain; that stretch reads RTARVPKYYR…QGKGTFVAKP (71 aa). The segment at residues 47–66 is a DNA-binding region (H-T-H motif); sequence ERTLAAEFDTSRTTVRQALQ.

It is found in the cytoplasm. With respect to regulation, binding to the target genes is abolished by GlcN6P, a central molecule in N-acetylglucosamine metabolism. In terms of biological role, global regulator that is part of the nutrient-sensing system. In the absence of glucosamine 6-P (GlcN6P), represses the phosphotransferase system (PTS) specific for the uptake of N-acetylglucosamine (PTSNag), and genes involved in the metabolism of chitin, as well as several genes involved in development, thereby linking carbon availability to morphogenesis. Also regulates the expression of the ABC transporters DasABC and NgcEFG, which are involved in N,N'-diacetylchitobiose ((GlcNAc)2) uptake. Binds to the DNA consensus sequence 5'-ACTGGTCTAGACCACT-3'. In Streptomyces coelicolor (strain ATCC BAA-471 / A3(2) / M145), this protein is HTH-type transcriptional repressor DasR (dasR).